A 273-amino-acid chain; its full sequence is Phosphate import ATP-binding protein PstB (273 aa).

In terms of domain architecture, ABC transporter spans Val-27–Ile-268. Gly-59–Ser-66 contributes to the ATP binding site.

This sequence belongs to the ABC transporter superfamily. Phosphate importer (TC 3.A.1.7) family. As to quaternary structure, the complex is composed of two ATP-binding proteins (PstB), two transmembrane proteins (PstC and PstA) and a solute-binding protein (PstS).

It localises to the cell inner membrane. It carries out the reaction phosphate(out) + ATP + H2O = ADP + 2 phosphate(in) + H(+). Part of the ABC transporter complex PstSACB involved in phosphate import. Responsible for energy coupling to the transport system. In Bradyrhizobium diazoefficiens (strain JCM 10833 / BCRC 13528 / IAM 13628 / NBRC 14792 / USDA 110), this protein is Phosphate import ATP-binding protein PstB.